The following is a 765-amino-acid chain: DNA topoisomerase 1 (765 aa).

Over residues 1-23 (MSGDHLHNDSQIEADFRLNDSHK) the composition is skewed to basic and acidic residues. A disordered region spans residues 1-199 (MSGDHLHNDS…NKKKKPKKEE (199 aa)). Ser2 bears the N-acetylserine mark. A phosphoserine mark is found at Ser2 and Ser10. Basic residues predominate over residues 24–39 (HKDKHKDREHRHKEHK). Basic and acidic residues predominate over residues 40–108 (KEKDREKSKH…DAKIKKEKEN (69 aa)). The residue at position 57 (Ser57) is a Phosphoserine. Residue Lys101 forms a Glycyl lysine isopeptide (Lys-Gly) (interchain with G-Cter in SUMO2) linkage. A Glycyl lysine isopeptide (Lys-Gly) (interchain with G-Cter in SUMO); alternate cross-link involves residue Lys103. A Glycyl lysine isopeptide (Lys-Gly) (interchain with G-Cter in SUMO2); alternate cross-link involves residue Lys103. Ser112 carries the post-translational modification Phosphoserine. Lys117 is covalently cross-linked (Glycyl lysine isopeptide (Lys-Gly) (interchain with G-Cter in SUMO); alternate). Lys117 participates in a covalent cross-link: Glycyl lysine isopeptide (Lys-Gly) (interchain with G-Cter in SUMO2); alternate. Lys117 participates in a covalent cross-link: Glycyl lysine isopeptide (Lys-Gly) (interchain with G-Cter in SUMO1); alternate. Over residues 129–166 (PKEDIKPLKRPRDEDDADYKPKKIKTEDTKKEKKRKLE) the composition is skewed to basic and acidic residues. Residues Lys134 and Lys148 each participate in a glycyl lysine isopeptide (Lys-Gly) (interchain with G-Cter in SUMO2) cross-link. A Glycyl lysine isopeptide (Lys-Gly) (interchain with G-Cter in SUMO); alternate cross-link involves residue Lys153. A Glycyl lysine isopeptide (Lys-Gly) (interchain with G-Cter in SUMO2); alternate cross-link involves residue Lys153. Residues Lys158 and Lys164 each participate in a glycyl lysine isopeptide (Lys-Gly) (interchain with G-Cter in SUMO2) cross-link. Lys172 participates in a covalent cross-link: Glycyl lysine isopeptide (Lys-Gly) (interchain with G-Cter in SUMO2); alternate. The residue at position 172 (Lys172) is an N6-acetyllysine; alternate. The segment covering 179–199 (KDKDKKVPEPDNKKKKPKKEE) has biased composition (basic and acidic residues). Lys204 participates in a covalent cross-link: Glycyl lysine isopeptide (Lys-Gly) (interchain with G-Cter in SUMO2). N6-acetyllysine is present on Lys280. Residue Lys336 forms a Glycyl lysine isopeptide (Lys-Gly) (interchain with G-Cter in SUMO2) linkage. Interaction with DNA regions lie at residues 425-426 (KY) and 488-493 (RAGNEK). Positions 432–765 (SSRIKGEKDW…IDMADEDYEF (334 aa)) constitute a Topo IB-type catalytic domain. Ser506 bears the Phosphoserine; by CK2 mark. A Glycyl lysine isopeptide (Lys-Gly) (interchain with G-Cter in SUMO2) cross-link involves residue Lys549. The segment at 585–587 (TAK) is interaction with DNA. Residues Lys642, Lys700, and Lys712 each participate in a glycyl lysine isopeptide (Lys-Gly) (interchain with G-Cter in SUMO2) cross-link. Tyr723 acts as the O-(3'-phospho-DNA)-tyrosine intermediate in catalysis.

Belongs to the type IB topoisomerase family. In terms of assembly, monomer. Interacts with ERCC6. Interacts with TPRN; TPRN interacts with a number of DNA damage response proteins, is recruited to sites of DNA damage and may play a role in DNA damage repair. (Microbial infection) Interacts with SV40 Large T antigen; this interactions allows viral DNA replication. Sumoylated. Lys-117 is the main site of sumoylation. Sumoylation plays a role in partitioning TOP1 between nucleoli and nucleoplasm. Levels are dramatically increased on camptothecin (CPT) treatment. In terms of processing, phosphorylation at Ser-506 by CK2 increases binding to supercoiled DNA and sensitivity to camptothecin. Endothelial cells.

Its subcellular location is the nucleus. It localises to the nucleolus. It is found in the nucleoplasm. The enzyme catalyses ATP-independent breakage of single-stranded DNA, followed by passage and rejoining.. Its activity is regulated as follows. Specifically inhibited by camptothecin (CPT), a plant alkaloid with antitumor activity. In terms of biological role, releases the supercoiling and torsional tension of DNA introduced during the DNA replication and transcription by transiently cleaving and rejoining one strand of the DNA duplex. Introduces a single-strand break via transesterification at a target site in duplex DNA. The scissile phosphodiester is attacked by the catalytic tyrosine of the enzyme, resulting in the formation of a DNA-(3'-phosphotyrosyl)-enzyme intermediate and the expulsion of a 5'-OH DNA strand. The free DNA strand then rotates around the intact phosphodiester bond on the opposing strand, thus removing DNA supercoils. Finally, in the religation step, the DNA 5'-OH attacks the covalent intermediate to expel the active-site tyrosine and restore the DNA phosphodiester backbone. Regulates the alternative splicing of tissue factor (F3) pre-mRNA in endothelial cells. Involved in the circadian transcription of the core circadian clock component BMAL1 by altering the chromatin structure around the ROR response elements (ROREs) on the BMAL1 promoter. The protein is DNA topoisomerase 1 (TOP1) of Homo sapiens (Human).